We begin with the raw amino-acid sequence, 505 residues long: Alpha-1-syntrophin (505 aa).

A disordered region spans residues 1–77 (MASGRRAPRT…AEPGAASPPL (77 aa)). PH domains lie at 6 to 269 (RAPR…AQVN) and 293 to 401 (DIKR…DGCH). The 84-residue stretch at 87-170 (RVTVRKADAG…EVVLEVKYMK (84 aa)) folds into the PDZ domain. 5 positions are modified to phosphoserine: Ser-101, Ser-184, Ser-189, Ser-193, and Ser-200. The segment at 180 to 211 (ASGTSVGWDSPPASPLQRQPSSPGPPPRDLRD) is disordered. The region spanning 449-505 (PFEKLQMSSDDGASLLFLDFGGAEGEIQLDLHSCPKTMVFIIHSFLSAKVTRLGLLA) is the SU domain. Positions 483 to 505 (PKTMVFIIHSFLSAKVTRLGLLA) are calmodulin-binding.

It belongs to the syntrophin family. Monomer and homodimer. Interacts with the dystrophin related protein DTNA; SGCG of the dystrophin glycoprotein complex; NOS1; GRB2; GA; TGFA; MAPK12 and the sodium channel proteins SCN4A and SCN5A. Interacts with the dystrophin protein DMD in a calmodulin dependent manner and with related protein UTRN; SGCA of the dystrophin glycoprotein complex; F-actin; calmodulin and with the other members of the syntrophin family SNTB1 and SNTB2. Interacts with MYOC; regulates muscle hypertrophy. Interacts with DTNB. Post-translationally, phosphorylated by CaM-kinase II. Phosphorylation may inhibit the interaction with DMD.

It localises to the cell membrane. It is found in the sarcolemma. Its subcellular location is the cell junction. The protein resides in the cytoplasm. The protein localises to the cytoskeleton. Functionally, adapter protein that binds to and probably organizes the subcellular localization of a variety of membrane proteins. May link various receptors to the actin cytoskeleton and the extracellular matrix via the dystrophin glycoprotein complex. Plays an important role in synapse formation and in the organization of UTRN and acetylcholine receptors at the neuromuscular synapse. Binds to phosphatidylinositol 4,5-bisphosphate. The protein is Alpha-1-syntrophin (SNTA1) of Bos taurus (Bovine).